The chain runs to 462 residues: Ammonium transporter Rh type B (462 aa).

Residues 1-11 are Cytoplasmic-facing; that stretch reads MTDPSTNMRLK. Residues 12–32 traverse the membrane as a helical segment; it reads LPITCFILQIILIILFGVLVQ. Over 33 to 62 the chain is Extracellular; it reads YDEDTDAKKHHHGNHSESKSDIENDFYYRY. Asn-46 is a glycosylation site (N-linked (GlcNAc...) asparagine). Residues 63–83 traverse the membrane as a helical segment; that stretch reads PSFQDVHVMIFVGFGFLMTFL. Topologically, residues 84–94 are cytoplasmic; it reads QRYGFSSVGFN. The chain crosses the membrane as a helical span at residues 95 to 115; sequence FLIAAFSLQWATLMQGFFHGL. Topologically, residues 116–125 are extracellular; the sequence is HEGKIHIGVE. A helical membrane pass occupies residues 126–146; the sequence is SMINADFCTGSVLISFGAVLG. Residues 147-152 lie on the Cytoplasmic side of the membrane; sequence KTSPVQ. The helical transmembrane segment at 153–173 threads the bilayer; it reads LLFMAVFEVTLFAVNEFILLT. Residues 174–180 are Extracellular-facing; that stretch reads LLGTKDA. The helical transmembrane segment at 181–201 threads the bilayer; sequence GGSMTIHTFGAYFGLMVTRIL. Residues 202 to 220 lie on the Cytoplasmic side of the membrane; that stretch reads YRPNLDKSKHKNCSVYHSD. A helical transmembrane segment spans residues 221–241; the sequence is LFAMIGTLYLWMFWPSFNSAV. Over 242–302 the chain is Extracellular; it reads TEHGDPQHRT…VAAGTAGEMM (61 aa). A helical membrane pass occupies residues 303–323; it reads LTPFGSMIVGFLAGIISVLGF. Residues 324–344 are Cytoplasmic-facing; it reads KYLTPILENKLKIQDTCGIHN. Residues 345-365 form a helical membrane-spanning segment; that stretch reads LHGMPGVLGAIVGAVTASLAS. Residues 366-395 are Extracellular-facing; sequence KEVYGEGLEKVFPDVASGKRTASDQGGVQA. Residues 396–416 form a helical membrane-spanning segment; that stretch reads ISLAVTLGMALFGGLIVGFIL. The Cytoplasmic portion of the chain corresponds to 417–462; sequence KLPIFGAPRDTTCFEDSLYWEVPGEEESHEDQLTTVKTEESDKLNS. The segment at 441-462 is disordered; sequence EEESHEDQLTTVKTEESDKLNS. The span at 453–462 shows a compositional bias: basic and acidic residues; the sequence is KTEESDKLNS.

It belongs to the ammonium transporter (TC 2.A.49) family. Rh subfamily.

It is found in the basolateral cell membrane. Its subcellular location is the cytoplasmic vesicle membrane. Its function is as follows. Functions as an ammonia transporter. May play a role in the elimination of ammonia in the gill. This chain is Ammonium transporter Rh type B (rhbg), found in Oryzias latipes (Japanese rice fish).